A 252-amino-acid chain; its full sequence is Protein AGAMOUS-LIKE 6 (252 aa).

One can recognise an MADS-box domain in the interval 1–61; it reads MGRGRVELKR…GKLYEFGSAG (61 aa). 2 consecutive short sequence motifs (nuclear localization signal) follow at residues 8-15 and 138-145; these read LKRIENKI and QRKTQIMM. The region spanning 85–175 is the K-box domain; it reads TQSWYQEVSK…KIKVSLELSS (91 aa).

Restricted to flowers.

The protein resides in the nucleus. Probable transcription factor involved in fruit development. Key regulator of the transition between the state of 'ovary arrest' imposed towards anthesis and the fertilization-triggered fruit set. This Solanum lycopersicum (Tomato) protein is Protein AGAMOUS-LIKE 6.